We begin with the raw amino-acid sequence, 82 residues long: Cytochrome b559 subunit alpha (82 aa).

Residues 22-36 (VIHAITLPSIFLAGF) form a helical membrane-spanning segment. Heme is bound at residue histidine 24.

It belongs to the PsbE/PsbF family. In terms of assembly, heterodimer of an alpha subunit and a beta subunit. PSII is composed of 1 copy each of membrane proteins PsbA, PsbB, PsbC, PsbD, PsbE, PsbF, PsbH, PsbI, PsbJ, PsbK, PsbL, PsbM, PsbT, PsbX, PsbY, PsbZ, Psb30/Ycf12, peripheral proteins PsbO, CyanoQ (PsbQ), PsbU, PsbV and a large number of cofactors. It forms dimeric complexes. The cofactor is heme b.

The protein resides in the cellular thylakoid membrane. This b-type cytochrome is tightly associated with the reaction center of photosystem II (PSII). PSII is a light-driven water:plastoquinone oxidoreductase that uses light energy to abstract electrons from H(2)O, generating O(2) and a proton gradient subsequently used for ATP formation. It consists of a core antenna complex that captures photons, and an electron transfer chain that converts photonic excitation into a charge separation. This chain is Cytochrome b559 subunit alpha, found in Synechococcus sp. (strain CC9311).